The sequence spans 253 residues: Vacuolar v-SNARE NYV1 (253 aa).

At 1-231 (MKRFNVSYVE…EIMWWQKVKN (231 aa)) the chain is on the cytoplasmic side. The segment at 147–166 (LNSSGNGQSSNGNGQNTISD) is disordered. The segment covering 148–162 (NSSGNGQSSNGNGQN) has biased composition (low complexity). In terms of domain architecture, v-SNARE coiled-coil homology spans 167-227 (IGDATEDQIK…VNIKEIMWWQ (61 aa)). The chain crosses the membrane as a helical; Anchor for type IV membrane protein span at residues 232-252 (ITLLTFTIILFVSAAFMFFYL). Residue Trp253 is a topological domain, vacuolar.

The protein belongs to the synaptobrevin family. In terms of assembly, present in a pentameric cis-SNARE complex composed of the v-SNAREs NYV1, VTI1 and YKT6, and the t-SNAREs VAM3 and VAM7 on vacuolar membranes. Interacts in trans with the cognate t-SNARE VAM3 during the docking step of homotypic vacuolar fusion. Interacts with the vacuolar transporter chaperone (VTC) complex and the vacuolar Ca(2+)-ATPase PMC1.

Its subcellular location is the vacuole membrane. Vacuolar v-SNARE required for docking. Only involved in homotypic vacuole fusion. Required for Ca(2+) efflux from the vacuolar lumen, a required signal for subsequent membrane fusion events, by inhibiting vacuolar Ca(2+)-ATPase PMC1 and promoting Ca(2+) release when forming trans-SNARE assemblies during the docking step. This chain is Vacuolar v-SNARE NYV1 (NYV1), found in Saccharomyces cerevisiae (strain ATCC 204508 / S288c) (Baker's yeast).